We begin with the raw amino-acid sequence, 260 residues long: MADS-box transcription factor 29 (260 aa).

One can recognise an MADS-box domain in the interval 1–61 (MGRGKIEIKR…GKMFEYCSPT (61 aa)). In terms of domain architecture, K-box spans 85–175 (DQQIFVEMTR…CRMINENHHQ (91 aa)).

Expressed in developing seeds.

The protein localises to the nucleus. Probable transcription factor. This Oryza sativa subsp. japonica (Rice) protein is MADS-box transcription factor 29 (MADS29).